The following is a 480-amino-acid chain: Prostacyclin synthase (480 aa).

The chain crosses the membrane as a helical span at residues 1-21 (MMWTALLLVGLSILVIVLYGR). Residues Arg104, Leu110, Asn277, 338–339 (TR), and Arg362 contribute to the substrate site. A heme-binding site is contributed by Cys421.

It belongs to the cytochrome P450 family. Requires heme as cofactor.

The protein resides in the endoplasmic reticulum membrane. It catalyses the reaction prostaglandin H2 = prostaglandin I2. The catalysed reaction is a hydroperoxyeicosatetraenoate = an oxoeicosatetraenoate + H2O. It carries out the reaction (15S)-hydroperoxy-(5Z,8Z,11Z,13E)-eicosatetraenoate = 15-oxo-(5Z,8Z,11Z,13E)-eicosatetraenoate + H2O. The enzyme catalyses (15S)-hydroperoxy-(5Z,8Z,11Z,13E)-eicosatetraenoate + AH2 = (15S)-hydroxy-(5Z,8Z,11Z,13E)-eicosatetraenoate + A + H2O. Its function is as follows. Catalyzes the isomerization of prostaglandin H2 to prostacyclin (= prostaglandin I2). In terms of biological role, catalyzes the biosynthesis and metabolism of eicosanoids. Catalyzes the isomerization of prostaglandin H2 to prostacyclin (= prostaglandin I2), a potent mediator of vasodilation and inhibitor of platelet aggregation. Additionally, displays dehydratase activity, toward hydroperoxyeicosatetraenoates (HPETEs), especially toward (15S)-hydroperoxy-(5Z,8Z,11Z,13E)-eicosatetraenoate (15(S)-HPETE). In Danio rerio (Zebrafish), this protein is Prostacyclin synthase.